A 253-amino-acid chain; its full sequence is Ubiquinone biosynthesis O-methyltransferase (253 aa).

4 residues coordinate S-adenosyl-L-methionine: arginine 47, glycine 78, aspartate 99, and methionine 141.

This sequence belongs to the methyltransferase superfamily. UbiG/COQ3 family.

It carries out the reaction a 3-demethylubiquinol + S-adenosyl-L-methionine = a ubiquinol + S-adenosyl-L-homocysteine + H(+). The enzyme catalyses a 3-(all-trans-polyprenyl)benzene-1,2-diol + S-adenosyl-L-methionine = a 2-methoxy-6-(all-trans-polyprenyl)phenol + S-adenosyl-L-homocysteine + H(+). It participates in cofactor biosynthesis; ubiquinone biosynthesis. Its function is as follows. O-methyltransferase that catalyzes the 2 O-methylation steps in the ubiquinone biosynthetic pathway. The polypeptide is Ubiquinone biosynthesis O-methyltransferase (Bradyrhizobium diazoefficiens (strain JCM 10833 / BCRC 13528 / IAM 13628 / NBRC 14792 / USDA 110)).